The primary structure comprises 405 residues: MTVLEESADASSRRLAQRANGPATVLAIGTANPANVFEQSSYPDFYFDITNSQHMTELKLKFSRMCQKSGIKKRYMHLNSEILKANPSLCAYWEKSLDVRQDIAVVEVPKLGKEASLKAIKEWGQPKSKITHLVFCTTSGVDMPGADWALTKLLGLRPSVKRLMMYQQGCFAGGTVLRVAKDVAENNKGARVLVVCSEITCVTFRGPSETHLDSLVGQALFGDGAAAVILGSDPLPEENPCFELHWSGSNILPDSDGAIDGHLREVGLTFHLMKDVPGIISKNIGKVLNDAFRSAFDESGNAEDRPASVNDIFWIAHPGGPAILDQVEEKMKLAPEKMRATRDVLSEYGNMSSACVLFIMDHMRRMSAQNKLQTTGEGLDWGVLLGFGPGLTVETVLLKSIRLAC.

C170 is a catalytic residue.

It belongs to the thiolase-like superfamily. Chalcone/stilbene synthases family.

It carries out the reaction (E)-4-coumaroyl-CoA + 3 malonyl-CoA + 3 H(+) = 2',4,4',6'-tetrahydroxychalcone + 3 CO2 + 4 CoA. Its pathway is secondary metabolite biosynthesis; flavonoid biosynthesis. Its function is as follows. The primary product of this enzyme is 4,2',4',6'-tetrahydroxychalcone (also termed naringenin-chalcone or chalcone) which can under specific conditions spontaneously isomerize into naringenin. In Equisetum arvense (Field horsetail), this protein is Chalcone synthase (CHS).